We begin with the raw amino-acid sequence, 463 residues long: Chromosomal replication initiator protein DnaA (463 aa).

The domain I, interacts with DnaA modulators stretch occupies residues 1–84 (MNTNQIILTN…QLFQHYNNAI (84 aa)). The domain II stretch occupies residues 84-124 (IKTVEIITKELPASNQATLELPTKTFADIGSSELNSENIFS). The tract at residues 125-343 (TFDIRFTFDN…GALNKVIAHS (219 aa)) is domain III, AAA+ region. ATP is bound by residues G171, G173, K174, and T175. The segment at 344-463 (NFTAKEITLE…INLMMKILQN (120 aa)) is domain IV, binds dsDNA.

It belongs to the DnaA family. Oligomerizes as a right-handed, spiral filament on DNA at oriC.

It is found in the cytoplasm. In terms of biological role, plays an essential role in the initiation and regulation of chromosomal replication. ATP-DnaA binds to the origin of replication (oriC) to initiate formation of the DNA replication initiation complex once per cell cycle. Binds the DnaA box (a 9 base pair repeat at the origin) and separates the double-stranded (ds)DNA. Forms a right-handed helical filament on oriC DNA; dsDNA binds to the exterior of the filament while single-stranded (ss)DNA is stabiized in the filament's interior. The ATP-DnaA-oriC complex binds and stabilizes one strand of the AT-rich DNA unwinding element (DUE), permitting loading of DNA polymerase. After initiation quickly degrades to an ADP-DnaA complex that is not apt for DNA replication. Binds acidic phospholipids. This is Chromosomal replication initiator protein DnaA from Rickettsia bellii (strain OSU 85-389).